Here is a 380-residue protein sequence, read N- to C-terminus: GATOR1 complex protein NPRL2 (380 aa).

An interaction with PDPK1 region spans residues 1-133 (MGSSCRIECI…SKQKLVPIMT (133 aa)). Arginine 78 serves as a coordination point for GDP. An Asymmetric dimethylarginine modification is found at arginine 78. Residues lysine 158 and lysine 357 each participate in a glycyl lysine isopeptide (Lys-Gly) (interchain with G-Cter in ubiquitin) cross-link.

This sequence belongs to the NPR2 family. Within the GATOR complex, component of the GATOR1 subcomplex, made of DEPDC5, NPRL2 and NPRL3. GATOR1 mediates the strong interaction of the GATOR complex with small GTPases Rag (RagA/RRAGA, RagB/RRAGB, RagC/RRAGC and/or RagD/RRAGD) heterodimers. GATOR1 interacts with GPR155/LYCHOS; interaction takes place in presence of cholesterol and prevents interaction between GATOR1 and KICSTOR. Interacts with PDPK1. In the presence of abundant amino acids, ubiquitinated at Lys-158 and Lys-357 via 'Lys-6'-linked ubiquitination by the WDR24 component of the GATOR2 complex, thereby inhibiting the GATOR1 complex and promoting mTORC1 activation. In terms of processing, asymmetric dimethylation at Arg-78 by PRMT1 inhibits the GTPase activator activity of the GATOR1 complex and consequently inducing timely mTORC1 activation under methionine-sufficient conditions.

Its subcellular location is the lysosome membrane. Catalytic component of the GATOR1 complex, a multiprotein complex that functions as an inhibitor of the amino acid-sensing branch of the mTORC1 pathway. In response to amino acid depletion, the GATOR1 complex has GTPase activating protein (GAP) activity and strongly increases GTP hydrolysis by RagA/RRAGA (or RagB/RRAGB) within heterodimeric Rag complexes, thereby turning them into their inactive GDP-bound form, releasing mTORC1 from lysosomal surface and inhibiting mTORC1 signaling. In the presence of abundant amino acids, the GATOR1 complex is ubiquitinated and inhibited by GATOR2. Within the GATOR1 complex, NPRL2 constitutes the catalytic subunit that mediates the GTPase activator activity and under methionine-sufficient conditions, the GTPase activator activity is inhibited by PRMT1 through methylation and consequently inducing timely mTORC1 activation. Its function is as follows. Suppresses Src-dependent tyrosine phosphorylation and activation of PDPK1 and its downstream signaling. Down-regulates PDPK1 kinase activity by interfering with tyrosine phosphorylation at 'Tyr-9', 'Tyr-373' and 'Tyr-376' residues. May act as a tumor suppressor. Suppresses cell growth and enhances sensitivity to various anticancer drugs. The chain is GATOR1 complex protein NPRL2 from Bos taurus (Bovine).